Here is a 138-residue protein sequence, read N- to C-terminus: Large ribosomal subunit protein uL16 (138 aa).

Over residues M1–Q13 the composition is skewed to basic residues. The segment at M1–L20 is disordered.

It belongs to the universal ribosomal protein uL16 family. In terms of assembly, part of the 50S ribosomal subunit.

Binds 23S rRNA and is also seen to make contacts with the A and possibly P site tRNAs. The polypeptide is Large ribosomal subunit protein uL16 (Bordetella avium (strain 197N)).